Here is a 309-residue protein sequence, read N- to C-terminus: Coproporphyrin III ferrochelatase (309 aa).

Fe-coproporphyrin III-binding positions include Y12, R29, 45-46 (RY), S53, and Y124. Residues H182 and E263 each contribute to the Fe(2+) site.

It belongs to the ferrochelatase family.

It is found in the cytoplasm. The catalysed reaction is Fe-coproporphyrin III + 2 H(+) = coproporphyrin III + Fe(2+). It functions in the pathway porphyrin-containing compound metabolism; protoheme biosynthesis. Its function is as follows. Involved in coproporphyrin-dependent heme b biosynthesis. Catalyzes the insertion of ferrous iron into coproporphyrin III to form Fe-coproporphyrin III. In Listeria innocua serovar 6a (strain ATCC BAA-680 / CLIP 11262), this protein is Coproporphyrin III ferrochelatase.